A 382-amino-acid chain; its full sequence is Anhydro-N-acetylmuramic acid kinase (382 aa).

ATP is bound at residue 9–16 (GTSLDGID).

The protein belongs to the anhydro-N-acetylmuramic acid kinase family.

It catalyses the reaction 1,6-anhydro-N-acetyl-beta-muramate + ATP + H2O = N-acetyl-D-muramate 6-phosphate + ADP + H(+). Its pathway is amino-sugar metabolism; 1,6-anhydro-N-acetylmuramate degradation. It participates in cell wall biogenesis; peptidoglycan recycling. Functionally, catalyzes the specific phosphorylation of 1,6-anhydro-N-acetylmuramic acid (anhMurNAc) with the simultaneous cleavage of the 1,6-anhydro ring, generating MurNAc-6-P. Is required for the utilization of anhMurNAc either imported from the medium or derived from its own cell wall murein, and thus plays a role in cell wall recycling. The protein is Anhydro-N-acetylmuramic acid kinase of Bacillus cereus (strain G9842).